The sequence spans 234 residues: MNSLLITGTDTGAGKTIVTSALAAYWHKYYPSQRLGVIKLLQTGIGDHEHYQAMFAGQESVEVVCPLRFTTPVAPPIAAERENQPIPLEIVWKSLVSLQKSCDFVLAEGLGGLGSPVTWELTVADLAGEWRLPTVLVVPVKLGAIAQAVANVALARQTQVNLKGIILSCSHPLSPQELSDWAPMDLIQSLTGVPVLGVIPYLETIKDLDQLAKSASHLDLEPLISLDCRTQFLG.

12-17 provides a ligand contact to ATP; that stretch reads GAGKTI. T16 provides a ligand contact to Mg(2+). K39 is an active-site residue. Residue T43 coordinates substrate. Residues D47, 108–111, 168–169, and 200–202 contribute to the ATP site; these read EGLG, SC, and PYL. Mg(2+) contacts are provided by D47 and E108.

This sequence belongs to the dethiobiotin synthetase family. Homodimer. Mg(2+) is required as a cofactor.

It localises to the cytoplasm. It catalyses the reaction (7R,8S)-7,8-diammoniononanoate + CO2 + ATP = (4R,5S)-dethiobiotin + ADP + phosphate + 3 H(+). It carries out the reaction (7R,8S)-8-amino-7-(carboxyamino)nonanoate + ATP = (4R,5S)-dethiobiotin + ADP + phosphate + H(+). Its pathway is cofactor biosynthesis; biotin biosynthesis; biotin from 7,8-diaminononanoate: step 1/2. Its function is as follows. Catalyzes a mechanistically unusual reaction, the ATP-dependent insertion of CO2 between the N7 and N8 nitrogen atoms of 7,8-diaminopelargonic acid (DAPA, also called 7,8-diammoniononanoate) to form a ureido ring. This cyanobacterium does not encode bioA (which catalyzes the formation of the precursor for this reaction in the cannonical pathway), instead it encodes bioU, which replaces bioA and also performs the first half of the cannonical BioD reaction. Thus in this organism BioD has a different substrate. This is ATP-dependent dethiobiotin synthetase BioD from Rippkaea orientalis (strain PCC 8801 / RF-1) (Cyanothece sp. (strain PCC 8801)).